The primary structure comprises 1024 residues: Beta-galactosidase (1024 aa).

The substrate site is built by Asn-103 and Asp-202. Na(+) is bound at residue Asp-202. Positions 417, 419, and 462 each coordinate Mg(2+). Substrate contacts are provided by residues Glu-462 and 538 to 541 (EYAH). The active-site Proton donor is the Glu-462. Catalysis depends on Glu-538, which acts as the Nucleophile. Asn-598 is a Mg(2+) binding site. Phe-602 and Asn-605 together coordinate Na(+). Residues Asn-605 and Trp-1000 each contribute to the substrate site.

The protein belongs to the glycosyl hydrolase 2 family. As to quaternary structure, homotetramer. Mg(2+) is required as a cofactor. The cofactor is Na(+).

It catalyses the reaction Hydrolysis of terminal non-reducing beta-D-galactose residues in beta-D-galactosides.. This Escherichia coli O6:K15:H31 (strain 536 / UPEC) protein is Beta-galactosidase.